The primary structure comprises 202 residues: Glycerol-3-phosphate acyltransferase (202 aa).

6 consecutive transmembrane segments (helical) span residues 3 to 23 (NLII…LILA), 61 to 81 (IATI…LKFL), 87 to 107 (LLWS…YLLF), 118 to 138 (GAMI…WVVI), 144 to 164 (ISSL…FIFN), and 167 to 187 (LEIH…YKHL).

This sequence belongs to the PlsY family. Probably interacts with PlsX.

It localises to the cell inner membrane. It carries out the reaction an acyl phosphate + sn-glycerol 3-phosphate = a 1-acyl-sn-glycero-3-phosphate + phosphate. It participates in lipid metabolism; phospholipid metabolism. Catalyzes the transfer of an acyl group from acyl-phosphate (acyl-PO(4)) to glycerol-3-phosphate (G3P) to form lysophosphatidic acid (LPA). This enzyme utilizes acyl-phosphate as fatty acyl donor, but not acyl-CoA or acyl-ACP. The protein is Glycerol-3-phosphate acyltransferase of Campylobacter jejuni subsp. jejuni serotype O:6 (strain 81116 / NCTC 11828).